A 185-amino-acid polypeptide reads, in one-letter code: Ribosome-recycling factor (185 aa).

The protein belongs to the RRF family.

The protein localises to the cytoplasm. Functionally, responsible for the release of ribosomes from messenger RNA at the termination of protein biosynthesis. May increase the efficiency of translation by recycling ribosomes from one round of translation to another. The protein is Ribosome-recycling factor of Pseudomonas putida (strain ATCC 700007 / DSM 6899 / JCM 31910 / BCRC 17059 / LMG 24140 / F1).